Here is a 64-residue protein sequence, read N- to C-terminus: Large ribosomal subunit protein bL35 (64 aa).

Residues 1-64 form a disordered region; it reads MPKNKTNSGA…RKSIKKLLGK (64 aa).

Belongs to the bacterial ribosomal protein bL35 family.

The chain is Large ribosomal subunit protein bL35 from Beutenbergia cavernae (strain ATCC BAA-8 / DSM 12333 / CCUG 43141 / JCM 11478 / NBRC 16432 / NCIMB 13614 / HKI 0122).